We begin with the raw amino-acid sequence, 706 residues long: Termination factor NPH-I homolog (706 aa).

The Helicase ATP-binding domain occupies 62–227 (IGQGENTRGL…VPCFNMLSGR (166 aa)). 75–82 (HQMGMGKT) contributes to the ATP binding site. Residues 168 to 171 (DEAH) carry the DEAH box motif. The 222-residue stretch at 378–599 (KIVCMLKNIK…HLNSAFRDLL (222 aa)) folds into the Helicase C-terminal domain.

The protein belongs to the DEAD box helicase family. DEAH subfamily. Part of the viral DNA-directed RNA polymerase that consists of 8 polII-like subunits (RPB1, RPB2, RPB3, RPB5, RPB6, RPB7, RPB9, RPB10), a capping enzyme and a termination factor.

The protein resides in the virion. In terms of biological role, putative DNA-dependent ATPase required for providing the needed energy to achieve the termination of early transcripts. This is Termination factor NPH-I homolog from African swine fever virus (isolate Pig/Kenya/KEN-50/1950) (ASFV).